We begin with the raw amino-acid sequence, 227 residues long: 2,3-bisphosphoglycerate-dependent phosphoglycerate mutase (227 aa).

Residues 7–14 (RHGFSEWN), 20–21 (TG), Arg-59, 86–89 (ERHY), Lys-97, 113–114 (RR), and 182–183 (GN) contribute to the substrate site. His-8 serves as the catalytic Tele-phosphohistidine intermediate. Glu-86 serves as the catalytic Proton donor/acceptor.

The protein belongs to the phosphoglycerate mutase family. BPG-dependent PGAM subfamily. As to quaternary structure, homodimer.

The enzyme catalyses (2R)-2-phosphoglycerate = (2R)-3-phosphoglycerate. It participates in carbohydrate degradation; glycolysis; pyruvate from D-glyceraldehyde 3-phosphate: step 3/5. Catalyzes the interconversion of 2-phosphoglycerate and 3-phosphoglycerate. The chain is 2,3-bisphosphoglycerate-dependent phosphoglycerate mutase from Haemophilus influenzae (strain 86-028NP).